Reading from the N-terminus, the 320-residue chain is Acetyl-coenzyme A carboxylase carboxyl transferase subunit alpha (320 aa).

Positions 33–294 (AFESEIQALR…GDAVEDELKA (262 aa)) constitute a CoA carboxyltransferase C-terminal domain.

Belongs to the AccA family. In terms of assembly, acetyl-CoA carboxylase is a heterohexamer composed of biotin carboxyl carrier protein (AccB), biotin carboxylase (AccC) and two subunits each of ACCase subunit alpha (AccA) and ACCase subunit beta (AccD).

The protein resides in the cytoplasm. The catalysed reaction is N(6)-carboxybiotinyl-L-lysyl-[protein] + acetyl-CoA = N(6)-biotinyl-L-lysyl-[protein] + malonyl-CoA. The protein operates within lipid metabolism; malonyl-CoA biosynthesis; malonyl-CoA from acetyl-CoA: step 1/1. In terms of biological role, component of the acetyl coenzyme A carboxylase (ACC) complex. First, biotin carboxylase catalyzes the carboxylation of biotin on its carrier protein (BCCP) and then the CO(2) group is transferred by the carboxyltransferase to acetyl-CoA to form malonyl-CoA. This Caulobacter sp. (strain K31) protein is Acetyl-coenzyme A carboxylase carboxyl transferase subunit alpha.